Here is a 363-residue protein sequence, read N- to C-terminus: Spermidine/putrescine import ATP-binding protein PotA (363 aa).

Residues 9–239 (IDVRNAVKRY…PANRFVADFI (231 aa)) enclose the ABC transporter domain. 41 to 48 (GPSGCGKT) contributes to the ATP binding site.

The protein belongs to the ABC transporter superfamily. Spermidine/putrescine importer (TC 3.A.1.11.1) family. As to quaternary structure, the complex is composed of two ATP-binding proteins (PotA), two transmembrane proteins (PotB and PotC) and a solute-binding protein (PotD).

It localises to the cell inner membrane. The catalysed reaction is ATP + H2O + polyamine-[polyamine-binding protein]Side 1 = ADP + phosphate + polyamineSide 2 + [polyamine-binding protein]Side 1.. Functionally, part of the ABC transporter complex PotABCD involved in spermidine/putrescine import. Responsible for energy coupling to the transport system. This Roseobacter denitrificans (strain ATCC 33942 / OCh 114) (Erythrobacter sp. (strain OCh 114)) protein is Spermidine/putrescine import ATP-binding protein PotA.